We begin with the raw amino-acid sequence, 61 residues long: Large ribosomal subunit protein eL24 (61 aa).

Residues cysteine 7, cysteine 10, cysteine 33, and cysteine 37 each coordinate Zn(2+). The C4-type zinc-finger motif lies at 7-37 (CSFCGGDIPPATGMMHVRNDGTILWFCSNKC).

Belongs to the eukaryotic ribosomal protein eL24 family. As to quaternary structure, part of the 50S ribosomal subunit. Forms a cluster with proteins L3 and L14. Zn(2+) serves as cofactor.

Binds to the 23S rRNA. The sequence is that of Large ribosomal subunit protein eL24 from Metallosphaera sedula (strain ATCC 51363 / DSM 5348 / JCM 9185 / NBRC 15509 / TH2).